The sequence spans 282 residues: Urease accessory protein UreD (282 aa).

This sequence belongs to the UreD family. UreD, UreF and UreG form a complex that acts as a GTP-hydrolysis-dependent molecular chaperone, activating the urease apoprotein by helping to assemble the nickel containing metallocenter of UreC. The UreE protein probably delivers the nickel.

The protein resides in the cytoplasm. Functionally, required for maturation of urease via the functional incorporation of the urease nickel metallocenter. The polypeptide is Urease accessory protein UreD (Methylobacterium sp. (strain 4-46)).